Here is a 246-residue protein sequence, read N- to C-terminus: Protein SRL3 (246 aa).

Positions 49–61 are enriched in polar residues; that stretch reads SISEAQDSPTSAP. 2 disordered regions span residues 49–68 and 200–229; these read SISE…GNED and HAKS…QENS. S212 bears the Phosphoserine mark.

In terms of assembly, interacts with CLN2. In terms of processing, phosphorylated by CDC28, probably in association with G1 cyclin CLN2.

The protein resides in the cytoplasm. Weakly suppresses a RAD53 null mutation when overexpressed. This Saccharomyces cerevisiae (strain ATCC 204508 / S288c) (Baker's yeast) protein is Protein SRL3 (SRL3).